Here is a 32-residue protein sequence, read N- to C-terminus: Protamine-1 (32 aa).

Residues Pro1–Arg32 form a disordered region.

In terms of tissue distribution, testis.

The protein localises to the nucleus. The protein resides in the chromosome. Its function is as follows. Protamines substitute for histones in the chromatin of sperm during the haploid phase of spermatogenesis. They compact sperm DNA into a highly condensed, stable and inactive complex. The protein is Protamine-1 of Esox lucius (Northern pike).